The primary structure comprises 428 residues: C4-dicarboxylate transport protein (428 aa).

Transmembrane regions (helical) follow at residues 8-28, 44-64, 76-96, 142-162, 184-204, 222-242, 326-346, and 352-372; these read SLYF…HFYP, LIKM…IAGM, VALL…LIIV, IGAF…LFGF, VIFG…FGAM, LIIC…GSIA, IVHQ…AAGV, and IVLA…LALI.

This sequence belongs to the dicarboxylate/amino acid:cation symporter (DAACS) (TC 2.A.23) family.

The protein localises to the cell inner membrane. Its function is as follows. Responsible for the transport of dicarboxylates such as succinate, fumarate, and malate from the periplasm across the membrane. This chain is C4-dicarboxylate transport protein, found in Escherichia coli O139:H28 (strain E24377A / ETEC).